The chain runs to 1178 residues: DNA-directed RNA polymerase subunit beta' (1178 aa).

C60, C62, C75, and C78 together coordinate Zn(2+). Positions 450, 452, and 454 each coordinate Mg(2+). Zn(2+) is bound by residues C795, C869, C876, and C879.

This sequence belongs to the RNA polymerase beta' chain family. As to quaternary structure, the RNAP catalytic core consists of 2 alpha, 1 beta, 1 beta' and 1 omega subunit. When a sigma factor is associated with the core the holoenzyme is formed, which can initiate transcription. The cofactor is Mg(2+). Zn(2+) serves as cofactor.

The catalysed reaction is RNA(n) + a ribonucleoside 5'-triphosphate = RNA(n+1) + diphosphate. In terms of biological role, DNA-dependent RNA polymerase catalyzes the transcription of DNA into RNA using the four ribonucleoside triphosphates as substrates. This is DNA-directed RNA polymerase subunit beta' from Clostridium botulinum (strain Loch Maree / Type A3).